A 122-amino-acid chain; its full sequence is Large ribosomal subunit protein bL12 (122 aa).

The protein belongs to the bacterial ribosomal protein bL12 family. As to quaternary structure, homodimer. Part of the ribosomal stalk of the 50S ribosomal subunit. Forms a multimeric L10(L12)X complex, where L10 forms an elongated spine to which 2 to 4 L12 dimers bind in a sequential fashion. Binds GTP-bound translation factors.

Forms part of the ribosomal stalk which helps the ribosome interact with GTP-bound translation factors. Is thus essential for accurate translation. The polypeptide is Large ribosomal subunit protein bL12 (Blochmanniella pennsylvanica (strain BPEN)).